The following is an 851-amino-acid chain: DNA mismatch repair protein MutS (851 aa).

Residue 602–609 (GPNMSGKS) coordinates ATP.

It belongs to the DNA mismatch repair MutS family.

Its function is as follows. This protein is involved in the repair of mismatches in DNA. It is possible that it carries out the mismatch recognition step. This protein has a weak ATPase activity. This chain is DNA mismatch repair protein MutS, found in Streptococcus pyogenes serotype M18 (strain MGAS8232).